The following is a 130-amino-acid chain: Small ribosomal subunit protein uS8 (130 aa).

Belongs to the universal ribosomal protein uS8 family. Part of the 30S ribosomal subunit.

Its function is as follows. One of the primary rRNA binding proteins, it binds directly to 16S rRNA central domain where it helps coordinate assembly of the platform of the 30S subunit. This Methanococcus vannielii (strain ATCC 35089 / DSM 1224 / JCM 13029 / OCM 148 / SB) protein is Small ribosomal subunit protein uS8.